The sequence spans 175 residues: Two-on-two hemoglobin-3 (175 aa).

Residues Tyr85 and His98 each contribute to the heme site. The segment at 153–175 (QNEKPKHKPQCACKHAANKPAEE) is disordered.

Belongs to the truncated hemoglobin family. Group II subfamily. Homodimer when ferric. Interacts with RGLG3 and RGLG4. Requires heme as cofactor. As to expression, expressed ubiquitously, with higher levels in root tissue than in shoot tissue.

Hemoglobin-like protein that exhibits an unusual concentration-independent binding of O(2) and CO. May promote shoot organogenesis from root explants in vitro. Inhibits RGLG3 and RGLG4 ubiquitination activity. The chain is Two-on-two hemoglobin-3 (GLB3) from Arabidopsis thaliana (Mouse-ear cress).